The sequence spans 298 residues: ATP synthase gamma chain (298 aa).

It belongs to the ATPase gamma chain family. In terms of assembly, F-type ATPases have 2 components, CF(1) - the catalytic core - and CF(0) - the membrane proton channel. CF(1) has five subunits: alpha(3), beta(3), gamma(1), delta(1), epsilon(1). CF(0) has three main subunits: a, b and c.

It is found in the cell inner membrane. Produces ATP from ADP in the presence of a proton gradient across the membrane. The gamma chain is believed to be important in regulating ATPase activity and the flow of protons through the CF(0) complex. In Bacteroides thetaiotaomicron (strain ATCC 29148 / DSM 2079 / JCM 5827 / CCUG 10774 / NCTC 10582 / VPI-5482 / E50), this protein is ATP synthase gamma chain.